Consider the following 245-residue polypeptide: Adenylate kinase (245 aa).

Position 15–20 (15–20 (GSGKGT)) interacts with ATP. The segment at 35–64 (SSGDLLRGAVSKDTPLSQEIKSYLDQGKLL) is NMP. AMP is bound by residues serine 36, arginine 41, 62 to 64 (KLL), 103 to 106 (GFPR), and glutamine 110. The tract at residues 143–176 (SRYICPACQGIYNEQQGFSSCPKCSVELIRRSDD) is LID. Arginine 144 is an ATP binding site. Zn(2+)-binding residues include cysteine 147 and cysteine 150. 153 to 154 (IY) serves as a coordination point for ATP. 2 residues coordinate Zn(2+): cysteine 163 and cysteine 166. Residues arginine 173 and arginine 184 each contribute to the AMP site. Alanine 212 is an ATP binding site.

Belongs to the adenylate kinase family. In terms of assembly, monomer.

The protein localises to the cytoplasm. The catalysed reaction is AMP + ATP = 2 ADP. Its pathway is purine metabolism; AMP biosynthesis via salvage pathway; AMP from ADP: step 1/1. Its function is as follows. Catalyzes the reversible transfer of the terminal phosphate group between ATP and AMP. Plays an important role in cellular energy homeostasis and in adenine nucleotide metabolism. This Chlamydia trachomatis serovar L2 (strain ATCC VR-902B / DSM 19102 / 434/Bu) protein is Adenylate kinase.